The sequence spans 37 residues: Large ribosomal subunit protein bL36 (37 aa).

It belongs to the bacterial ribosomal protein bL36 family.

This Endomicrobium trichonymphae protein is Large ribosomal subunit protein bL36.